The following is a 642-amino-acid chain: Cylicin-1 (642 aa).

2 disordered regions span residues 167–203 (NGEPEILGNTEKNPSKSSHKIKLPKTSNSTSETNLEY) and 284–607 (NCSQ…CEPF). Polar residues predominate over residues 191-203 (KTSNSTSETNLEY). 8 repeat units span residues 294–313 (LKTGGKKERDSDIDSGGSKD), 314–344 (AKKEGKKKGKRESRKKRNTESSDAESGDSKD), 345–391 (GKKK…KKST), 392–432 (GSTG…SSKK), 433–464 (SKKDEKKENKGRKKKPIKDTESTDADSESEGD), 465–500 (STGKKNEKKDKKITKKGEKKDAKKNTASSESESDLG), 501–526 (VNKKKTKIKEIVSFSDSTSDSYSKAG), and 527–543 (RRKNVRRSDSESEDSSG). A compositionally biased stretch (basic and acidic residues) spans 298–316 (GKKERDSDIDSGGSKDAKK). Basic residues predominate over residues 317-330 (EGKKKGKRESRKKR). Basic and acidic residues predominate over residues 353–364 (KKNEIKKKKDTD). The segment covering 388-404 (KKSTGSTGSESVDSKST) has biased composition (low complexity). Residues 405 to 416 (NKVKKQVKKGVM) show a composition bias toward basic residues. Positions 428-440 (ASSKKSKKDEKKE) are enriched in basic and acidic residues. The segment covering 454–463 (STDADSESEG) has biased composition (acidic residues). The span at 465 to 488 (STGKKNEKKDKKITKKGEKKDAKK) shows a compositional bias: basic and acidic residues. The segment covering 513 to 523 (SFSDSTSDSYS) has biased composition (low complexity). An 8 X approximate tandem repeats region spans residues 527-543 (RRKNVRRSDSESEDSSG).

Interacts with proteins of spermatozoa head including ACTL7A, CCIN, FAM209 and SPACA1; the interactions may be necessary for proper acrosome attachment to the nuclear envelope. Testis.

Its subcellular location is the cytoplasm. The protein localises to the cytoskeleton. It localises to the perinuclear theca. The protein resides in the calyx. Functionally, plays a role in the establishment of normal sperm morphology during spermatogenesis and is required for acrosome attachment to the nuclear envelope. This Mus musculus (Mouse) protein is Cylicin-1.